A 193-amino-acid chain; its full sequence is Chaperone protein TorD (193 aa).

It belongs to the TorD/DmsD family. TorD subfamily.

Its subcellular location is the cytoplasm. Involved in the biogenesis of TorA. Acts on TorA before the insertion of the molybdenum cofactor and, as a result, probably favors a conformation of the apoenzyme that is competent for acquiring the cofactor. This is Chaperone protein TorD from Histophilus somni (strain 129Pt) (Haemophilus somnus).